We begin with the raw amino-acid sequence, 259 residues long: Deoxyribose-phosphate aldolase (259 aa).

Aspartate 101 serves as the catalytic Proton donor/acceptor. Lysine 166 acts as the Schiff-base intermediate with acetaldehyde in catalysis. Catalysis depends on lysine 200, which acts as the Proton donor/acceptor.

The protein belongs to the DeoC/FbaB aldolase family. DeoC type 2 subfamily.

It localises to the cytoplasm. The catalysed reaction is 2-deoxy-D-ribose 5-phosphate = D-glyceraldehyde 3-phosphate + acetaldehyde. It participates in carbohydrate degradation; 2-deoxy-D-ribose 1-phosphate degradation; D-glyceraldehyde 3-phosphate and acetaldehyde from 2-deoxy-alpha-D-ribose 1-phosphate: step 2/2. In terms of biological role, catalyzes a reversible aldol reaction between acetaldehyde and D-glyceraldehyde 3-phosphate to generate 2-deoxy-D-ribose 5-phosphate. The polypeptide is Deoxyribose-phosphate aldolase (Glaesserella parasuis serovar 5 (strain SH0165) (Haemophilus parasuis)).